The primary structure comprises 159 residues: Small ribosomal subunit protein uS7 (159 aa).

The protein belongs to the universal ribosomal protein uS7 family. Part of the 30S ribosomal subunit. Contacts proteins S9 and S11.

In terms of biological role, one of the primary rRNA binding proteins, it binds directly to 16S rRNA where it nucleates assembly of the head domain of the 30S subunit. Is located at the subunit interface close to the decoding center, probably blocks exit of the E-site tRNA. The sequence is that of Small ribosomal subunit protein uS7 from Endomicrobium trichonymphae.